Consider the following 150-residue polypeptide: Snaclec rhinocetin subunit beta (150 aa).

Residues 1–23 (MGRFIFLSSGLLVVFLSLSGTGA) form the signal peptide. Cystine bridges form between Cys-27-Cys-38, Cys-55-Cys-144, and Cys-121-Cys-136. In terms of domain architecture, C-type lectin spans 34–145 (YEGYCYKVFK…CNRQQYFVCK (112 aa)).

Belongs to the snaclec family. As to quaternary structure, heterodimer; disulfide-linked. In terms of tissue distribution, expressed by the venom gland.

It localises to the secreted. In terms of biological role, antagonist of the alpha-2 subunit of the integrin alpha-2/beta-1 (ITGA2/ITGB1) on human platelets and endothelial cells. This protein inhibits collagen-stimulated activation of human platelets in a dose-dependent manner. In addition, it antagonizes the binding of monoclonal antibodies against the alpha-2 subunit of integrin alpha-2/beta-1 to platelets and it coimmunoprecipitates with this integrin. The protein is Snaclec rhinocetin subunit beta of Bitis rhinoceros (West African gaboon viper).